The sequence spans 347 residues: Histidinol-phosphate aminotransferase (347 aa).

K209 carries the N6-(pyridoxal phosphate)lysine modification.

Belongs to the class-II pyridoxal-phosphate-dependent aminotransferase family. Histidinol-phosphate aminotransferase subfamily. Homodimer. It depends on pyridoxal 5'-phosphate as a cofactor.

The enzyme catalyses L-histidinol phosphate + 2-oxoglutarate = 3-(imidazol-4-yl)-2-oxopropyl phosphate + L-glutamate. The protein operates within amino-acid biosynthesis; L-histidine biosynthesis; L-histidine from 5-phospho-alpha-D-ribose 1-diphosphate: step 7/9. This is Histidinol-phosphate aminotransferase from Geotalea uraniireducens (strain Rf4) (Geobacter uraniireducens).